The chain runs to 542 residues: MTTPRPVLLAIMDGWGLAPAGPGNGVSLANTPNVNHWMATCPTTQLHASGLDVGLPEGQIGNSEVGHLNIGAGLVVYQDSTRISESIKSGEFFENPAFLEAVQIVKERGTNMHLIGLIGRGGVHAYDIHLAGLLQLMAQQGVNHTYIHAFMDGRDTLPQSGLGYMRELQQTISQIGVGQVASVIGRYYAMDRDKRWERVGAAYAAMVEGVGHTASDPISAIEQAYLRDARGDEFIEATVITDSAGVALPRISTGDVVICFNFRADRVRQITRALMQSDLNTMIQEWYANQAEQGLQLPTTIWQRPEQVSNLHYVTMTQYDATFPYAIAYPPHYITEPLAKVIADAGKRQYHSAETEKYPHVTFFLNGRREEPFAGEDRVMAASPKVATYDLQPEMSAEEVAAKLLDAVNSQIYDFLVVNFANPDMVGHTGVIPAVVKACETVDRCLGQVVPAVVAQGGAAILIADHGNAEQMIDPQTGGPHTAHTTNLVPCILVADPATGLTREQISLRAGGRLADLAPTILDLLGLQKAAAMTGTSLIETK.

Mn(2+) contacts are provided by Asp13 and Ser63. Residue Ser63 is the Phosphoserine intermediate of the active site. Residues His124, Arg154–Asp155, Arg186, Arg192, Arg263–Arg266, and Lys357 contribute to the substrate site. The Mn(2+) site is built by Asp424, His428, Asp465, His466, and His484.

Belongs to the BPG-independent phosphoglycerate mutase family. In terms of assembly, monomer. Mn(2+) is required as a cofactor.

The catalysed reaction is (2R)-2-phosphoglycerate = (2R)-3-phosphoglycerate. It functions in the pathway carbohydrate degradation; glycolysis; pyruvate from D-glyceraldehyde 3-phosphate: step 3/5. Catalyzes the interconversion of 2-phosphoglycerate and 3-phosphoglycerate. This is 2,3-bisphosphoglycerate-independent phosphoglycerate mutase from Herpetosiphon aurantiacus (strain ATCC 23779 / DSM 785 / 114-95).